We begin with the raw amino-acid sequence, 367 residues long: tRNA-specific 2-thiouridylase MnmA (367 aa).

ATP is bound by residues 14-21 (AMSGGVDS) and leucine 40. Residue cysteine 108 is the Nucleophile of the active site. Residues cysteine 108 and cysteine 204 are joined by a disulfide bond. Glycine 132 is a binding site for ATP. The segment at 154-156 (KDQ) is interaction with tRNA. Catalysis depends on cysteine 204, which acts as the Cysteine persulfide intermediate.

Belongs to the MnmA/TRMU family.

It localises to the cytoplasm. It catalyses the reaction S-sulfanyl-L-cysteinyl-[protein] + uridine(34) in tRNA + AH2 + ATP = 2-thiouridine(34) in tRNA + L-cysteinyl-[protein] + A + AMP + diphosphate + H(+). In terms of biological role, catalyzes the 2-thiolation of uridine at the wobble position (U34) of tRNA, leading to the formation of s(2)U34. The sequence is that of tRNA-specific 2-thiouridylase MnmA from Rickettsia bellii (strain OSU 85-389).